A 365-amino-acid chain; its full sequence is Zinc finger TRAF-type-containing protein 1-A (365 aa).

The segment at 1 to 56 is disordered; it reads MSEEREAPGPLASSSAGLGAEVGQEEVPGGAGPARLLLLPSDSDGPPKKRLRSEAE. Residues 72-117 form an RING-type; degenerate zinc finger; the sequence is CTVCLDLPKASVYQCTNGHLMCAGCFIHLLADSRLKEEQATCPNCR. The segment at 113–186 adopts a TRAF-type zinc-finger fold; the sequence is CPNCRCEISK…PWEGPYHELT (74 aa).

Belongs to the ZFTRAF1 family.

The protein localises to the cytoplasm. The polypeptide is Zinc finger TRAF-type-containing protein 1-A (Xenopus laevis (African clawed frog)).